The following is a 68-amino-acid chain: Large ribosomal subunit protein bL33c (68 aa).

The protein belongs to the bacterial ribosomal protein bL33 family.

It localises to the plastid. The protein resides in the chloroplast. This is Large ribosomal subunit protein bL33c from Amborella trichopoda.